The following is a 343-amino-acid chain: S-adenosylmethionine:tRNA ribosyltransferase-isomerase (343 aa).

The protein belongs to the QueA family. Monomer.

It is found in the cytoplasm. The enzyme catalyses 7-aminomethyl-7-carbaguanosine(34) in tRNA + S-adenosyl-L-methionine = epoxyqueuosine(34) in tRNA + adenine + L-methionine + 2 H(+). It participates in tRNA modification; tRNA-queuosine biosynthesis. Transfers and isomerizes the ribose moiety from AdoMet to the 7-aminomethyl group of 7-deazaguanine (preQ1-tRNA) to give epoxyqueuosine (oQ-tRNA). This chain is S-adenosylmethionine:tRNA ribosyltransferase-isomerase, found in Natranaerobius thermophilus (strain ATCC BAA-1301 / DSM 18059 / JW/NM-WN-LF).